The following is a 61-amino-acid chain: Sperm protamine P1 (61 aa).

A disordered region spans residues 1–61 (MARYRHSRSR…RRYHSHRRRY (61 aa)).

This sequence belongs to the protamine P1 family. As to expression, testis.

The protein resides in the nucleus. It localises to the chromosome. Protamines substitute for histones in the chromatin of sperm during the haploid phase of spermatogenesis. They compact sperm DNA into a highly condensed, stable and inactive complex. This Notoryctes typhlops (Southern marsupial mole) protein is Sperm protamine P1 (PRM1).